Reading from the N-terminus, the 403-residue chain is Ubiquitin-like modifier-activating enzyme 5 (403 aa).

ATP-binding residues include glycine 81, aspartate 102, lysine 125, asparagine 148, and asparagine 182. Cysteine 224 and cysteine 227 together coordinate Zn(2+). The active-site Glycyl thioester intermediate is cysteine 248. 2 residues coordinate Zn(2+): cysteine 301 and cysteine 306. Residues valine 333–valine 345 carry the UFM1-interacting sequence (UIS) motif. Residues serine 346–lysine 376 are linker. Serine 357 and serine 392 each carry phosphoserine. A UFC1-binding sequence (UFC) motif is present at residues aspartate 388 to methionine 403.

The protein belongs to the ubiquitin-activating E1 family. UBA5 subfamily. In terms of assembly, homodimer; homodimerization is required for UFM1 activation. Interacts (via UIS motif) with UFM1; binds UFM1 via a trans-binding mechanism in which UFM1 interacts with distinct sites in both subunits of the UBA5 homodimer. Interacts (via C-terminus) with UFC1. Interacts (via UIS motif) with GABARAPL2 and, with lower affinity, with GABARAP and GABARAPL1.

Its subcellular location is the cytoplasm. It localises to the nucleus. The protein localises to the endoplasmic reticulum membrane. The protein resides in the golgi apparatus. E1-like enzyme which specifically catalyzes the first step in ufmylation. Activates UFM1 by first adenylating its C-terminal glycine residue with ATP, and thereafter linking this residue to the side chain of a cysteine residue in E1, yielding a UFM1-E1 thioester and free AMP. Activates UFM1 via a trans-binding mechanism, in which UFM1 interacts with distinct sites in both subunits of the UBA5 homodimer. Trans-binding also promotes stabilization of the UBA5 homodimer, and enhances ATP-binding. Transfer of UFM1 from UBA5 to the E2-like enzyme UFC1 also takes place using a trans mechanism. Ufmylation plays a key role in various processes, such as ribosome recycling, response to DNA damage, interferon response or reticulophagy (also called ER-phagy). Ufmylation is essential for erythroid differentiation of both megakaryocytes and erythrocytes. In Mus musculus (Mouse), this protein is Ubiquitin-like modifier-activating enzyme 5.